Consider the following 313-residue polypeptide: MNTFSQVWVFSDTPSRLPELMNGAQALANQINAFVLNDADGAQAIQLGANHVWKLNGKPDDRMIEDYAGVMADTIRQHGADGLVLLPNTRRGKLLAAKLGYRLKAAVSNDASTVSVQDGKATVKHMVYGGLAIGEERIATPYAVLTISSGTFDAAQPDASRTGETHTVEWQAPAVAITRTATQARQSNSVDLDKARLVVSVGRGIGSKENIALAEQLCKAIGAELACSRPVAENEKWMEHERYVGISNLMLKPELYLAVGISGQIQHMVGANASQTIFAINKDKNAPIFQYADYGIVGDAVKILPALTAALAR.

255–283 (LYLAVGISGQIQHMVGANASQTIFAINKD) contributes to the FAD binding site.

This sequence belongs to the ETF alpha-subunit/FixB family. Heterodimer of FixA and FixB.

The protein operates within amine and polyamine metabolism; carnitine metabolism. Its function is as follows. Required for anaerobic carnitine reduction. May bring reductant to CaiA. The protein is Protein FixB of Shigella flexneri.